The chain runs to 298 residues: 4-hydroxy-tetrahydrodipicolinate synthase (298 aa).

Position 51 (Thr-51) interacts with pyruvate. Tyr-139 functions as the Proton donor/acceptor in the catalytic mechanism. Residue Lys-167 is the Schiff-base intermediate with substrate of the active site. Ile-209 is a pyruvate binding site.

Belongs to the DapA family. In terms of assembly, homotetramer; dimer of dimers.

It localises to the cytoplasm. It catalyses the reaction L-aspartate 4-semialdehyde + pyruvate = (2S,4S)-4-hydroxy-2,3,4,5-tetrahydrodipicolinate + H2O + H(+). It participates in amino-acid biosynthesis; L-lysine biosynthesis via DAP pathway; (S)-tetrahydrodipicolinate from L-aspartate: step 3/4. Functionally, catalyzes the condensation of (S)-aspartate-beta-semialdehyde [(S)-ASA] and pyruvate to 4-hydroxy-tetrahydrodipicolinate (HTPA). The polypeptide is 4-hydroxy-tetrahydrodipicolinate synthase (Haemophilus influenzae (strain PittGG)).